A 303-amino-acid polypeptide reads, in one-letter code: T-box protein 38 (303 aa).

The T-box DNA-binding region spans 14–195; that stretch reads LSTPEIWEEF…HNKFASGFRS (182 aa). The disordered stretch occupies residues 193-225; the sequence is FRSNGKRRLSSDSENSENSPPKRSKLVTPPTIS. A compositionally biased stretch (low complexity) spans 204–213; that stretch reads DSENSENSPP.

It is found in the nucleus. Its function is as follows. Transcription factor. Required for mesodermal induction, acting redundantly with transcription factor tbx-37. Together with tbx-37, acts by inducing cell fates in the AB lineage, thereby playing a role in development of the anterior pharynx. The polypeptide is T-box protein 38 (tbx-38) (Caenorhabditis elegans).